The following is a 398-amino-acid chain: Dihydroorotase (398 aa).

The Zn(2+) site is built by H58 and H60. Substrate is bound by residues 60–62 (HFR) and N92. Zn(2+) contacts are provided by D151, H178, and H215. Residue N256 coordinates substrate. Residue D283 coordinates Zn(2+). D283 is an active-site residue. Substrate contacts are provided by residues H287 and 297–298 (PG).

This sequence belongs to the metallo-dependent hydrolases superfamily. DHOase family. Class I DHOase subfamily. The cofactor is Zn(2+).

It catalyses the reaction (S)-dihydroorotate + H2O = N-carbamoyl-L-aspartate + H(+). The protein operates within pyrimidine metabolism; UMP biosynthesis via de novo pathway; (S)-dihydroorotate from bicarbonate: step 3/3. Catalyzes the reversible cyclization of carbamoyl aspartate to dihydroorotate. This chain is Dihydroorotase, found in Clostridium botulinum (strain Eklund 17B / Type B).